We begin with the raw amino-acid sequence, 690 residues long: Sodium-dependent phosphate transport protein 2B (690 aa).

Positions 1 to 42 (MAPWPELGDAQPNPDKYLEGAAGQQPTAPDKSKETNKTDNTE) are disordered. Over 1-100 (MAPWPELGDA…ILCFFQGIGR (100 aa)) the chain is Cytoplasmic. Residues 30 to 40 (DKSKETNKTDN) show a composition bias toward basic and acidic residues. Residues 101-121 (LILLLGFLYFFVCSLDILSSA) traverse the membrane as a helical segment. At 122 to 135 (FQLVGGKMAGQFFS) the chain is on the extracellular side. A helical membrane pass occupies residues 136–156 (NSSIMSNPLLGLVIGVLVTVL). The Cytoplasmic portion of the chain corresponds to 157 to 212 (VQSSSTSTSIVVSMVSSSLLTVRAAIPIIMGANIGTSITNTIVALMQVGDRSEFRR). A helical transmembrane segment spans residues 213–233 (AFAGATVHDFFNWLSVLVLLP). The Extracellular segment spans residues 234–362 (VEVATHYLEI…IFVNFHLPDL (129 aa)). N-linked (GlcNAc...) asparagine glycans are attached at residues N295, N308, N313, N321, and N340. C303 and C350 are disulfide-bonded. The chain crosses the membrane as a helical span at residues 363 to 383 (AVGTILLILSLLVLCGCLIMI). Topologically, residues 384–407 (VKILGSVLKGQVATVIKKTINTDF) are cytoplasmic. The chain crosses the membrane as a helical span at residues 408-428 (PFPFAWLTGYLAILVGAGMTF). Topologically, residues 429–485 (IVQSSSVFTSALTPLIGIGVITIERAYPLTLGSNIGTTTTAILAALASPGNALRSSL) are extracellular. The chain crosses the membrane as a helical span at residues 486–506 (QIALCHFFFNISGILLWYPIP). Residues 507-525 (FTRLPIRMAKGLGNISAKY) are Cytoplasmic-facing. The helical transmembrane segment at 526–546 (RWFAVFYLIIFFFLIPLTVFG) threads the bilayer. The Extracellular segment spans residues 547 to 552 (LSLAGW). The chain crosses the membrane as a helical span at residues 553-573 (RVLVGVGVPVVFIIILVLCLR). At 574 to 689 (LLQSRCPRVL…ASDSKTECTA (116 aa)) the chain is on the cytoplasmic side.

It belongs to the SLC34A transporter family. Highly expressed in lung. Also detected in pancreas, kidney, small intestine, ovary, testis, prostate and mammary gland. In lung, it is found in alveolar type II cells but not in bronchiolar epithelium.

Its subcellular location is the apical cell membrane. The catalysed reaction is 3 Na(+)(out) + phosphate(out) = 3 Na(+)(in) + phosphate(in). Involved in actively transporting phosphate into cells via Na(+) cotransport. The sequence is that of Sodium-dependent phosphate transport protein 2B (SLC34A2) from Homo sapiens (Human).